We begin with the raw amino-acid sequence, 568 residues long: Natural resistance-associated macrophage protein 2 (568 aa).

The tract at residues 1-40 (MVLGPEQKMSDDSVSGDHGESASLGNINPAYSNPSLSQSP) is disordered. Residues 1–69 (MVLGPEQKMS…EEYSCFSFRK (69 aa)) are Cytoplasmic-facing. Basic and acidic residues predominate over residues 8–20 (KMSDDSVSGDHGE). Over residues 23-40 (SLGNINPAYSNPSLSQSP) the composition is skewed to polar residues. A helical transmembrane segment spans residues 70-90 (LWAFTGPGFLMSIAYLDPGNI). The Extracellular segment spans residues 91–96 (ESDLQS). The helical transmembrane segment at 97–117 (GAVAGFKLLWILLLATLVGLL) threads the bilayer. At 118-154 (LQRLAARLGVVTGLHLAEVCHRQYPKVPRVILWLMVE) the chain is on the cytoplasmic side. The helical transmembrane segment at 155 to 175 (LAIIGSDMQEVIGSAIAINLL) threads the bilayer. At 176–179 (SVGR) the chain is on the extracellular side. A helical transmembrane segment spans residues 180 to 200 (IPLWGGVLITIADTFVFLFLD). The Cytoplasmic segment spans residues 201–208 (KYGLRKLE). A helical membrane pass occupies residues 209–229 (AFFGFLITIMALTFGYEYVTV). The Extracellular portion of the chain corresponds to 230-255 (KPSQSQVLKGMFVPSCSGCRTPQIEQ). The chain crosses the membrane as a helical span at residues 256-276 (AVGIVGAVIMPHNMYLHSALV). At 277-301 (KSRQVNRNNKQEVREANKYFFIESC) the chain is on the cytoplasmic side. The helical transmembrane segment at 302–322 (IALFVSFIINVFVVSVFAEAF) threads the bilayer. The Extracellular segment spans residues 323 to 360 (FGKTNEQVVEVCTNTSSPHAGLFPKDNSTLAVDIYKGG). Asparagine 336 and asparagine 349 each carry an N-linked (GlcNAc...) asparagine glycan. Residues 361–381 (VVLGCYFGPAALYIWAVGILA) traverse the membrane as a helical segment. Residues 382–408 (AGQSSTMTGTYSGQFVMEGFLNLKWSR) lie on the Cytoplasmic side of the membrane. Residues 409–429 (FARVVLTRSIAIIPTLLVAVF) traverse the membrane as a helical segment. The Extracellular segment spans residues 430-440 (QDVEHLTGMND). Residues 441–461 (FLNVLQSLQLPFALIPILTFT) traverse the membrane as a helical segment. Residues 462–482 (SLRPVMSDFANGLGWRIAGGI) are Cytoplasmic-facing. The helical transmembrane segment at 483–503 (LVLIICSINMYFVVVYVRDLG) threads the bilayer. Over 504–506 (HVA) the chain is Extracellular. The helical transmembrane segment at 507–527 (LYVVAAVVSVAYLGFVFYLGW) threads the bilayer. Residues 528 to 568 (QCLIALGMSFLDCGHTCHLGLTAQPELYLLNTMDADSLVSR) are Cytoplasmic-facing. The required for early endosome targeting stretch occupies residues 555 to 559 (YLLNT). Serine 564 and serine 567 each carry phosphoserine.

This sequence belongs to the NRAMP family. Forms a complex with NDFIP1 and NEDD4L, in cortical neurons, in response to iron and cobalt exposure; this interaction leads to SLC11A2 ubiquitination by NEDD4L and proteasome-dependent degradation. Interacts with NDFIP1, NDFIP2 and WWP2; this interaction leads to SLC11A2 ubiquitination by WWP2 and subsequent proteasome-dependent degradation. Interacts with COX2 and TOM6 at the outer mitochondrion membrane. Interacts with ARRDC1; this interaction regulates the incorporation of SLC11A2 into extracellular vesicles through an ubiquitination-dependent mechanism. Interacts with ARRDC4; controls the incorporation of SLC11A2 into extracellular vesicles through an ubiquitination-dependent mechanism. Post-translationally, ubiquitinated by WWP2. In terms of processing, N-glycosylated. In terms of tissue distribution, ubiquitously expressed. Expressed in erythroid progenitors.

The protein localises to the early endosome membrane. Its subcellular location is the apical cell membrane. The protein resides in the late endosome membrane. It localises to the lysosome membrane. It is found in the cell membrane. The protein localises to the extracellular vesicle membrane. Its subcellular location is the mitochondrion outer membrane. The protein resides in the golgi apparatus. It localises to the trans-Golgi network membrane. It is found in the recycling endosome membrane. The catalysed reaction is Fe(2+)(in) + H(+)(in) = Fe(2+)(out) + H(+)(out). It carries out the reaction Co(2+)(out) + H(+)(out) = Co(2+)(in) + H(+)(in). The enzyme catalyses Cd(2+)(out) + H(+)(out) = Cd(2+)(in) + H(+)(in). It catalyses the reaction Mn(2+)(in) + H(+)(in) = Mn(2+)(out) + H(+)(out). The catalysed reaction is Zn(2+)(out) + H(+)(out) = Zn(2+)(in) + H(+)(in). It carries out the reaction Ni(2+)(out) + H(+)(out) = Ni(2+)(in) + H(+)(in). The enzyme catalyses H(+)(in) = H(+)(out). It catalyses the reaction Fe(2+)(in) = Fe(2+)(out). Proton-coupled metal ion symporter operating with a proton to metal ion stoichiometry of 1:1. Selectively transports various divalent metal cations, in decreasing affinity: Cd(2+) &gt; Fe(2+) &gt; Co(2+), Mn(2+) &gt;&gt; Zn(2+), Ni(2+), VO(2+). Essential for maintenance of iron homeostasis by modulating intestinal absorption of dietary Fe(2+) and TF-associated endosomal Fe(2+) transport in erythroid precursors and other cells. Enables Fe(2+) and Mn(2+) ion entry into mitochondria, and is thus expected to promote mitochondrial heme synthesis, iron-sulfur cluster biogenesis and antioxidant defense. Can mediate uncoupled fluxes of either protons or metal ions. In Homo sapiens (Human), this protein is Natural resistance-associated macrophage protein 2 (SLC11A2).